We begin with the raw amino-acid sequence, 64 residues long: Large ribosomal subunit protein bL35 (64 aa).

The span at 1-28 (MSKAKTHSGAAKRFKKTASGYKHKHAFK) shows a compositional bias: basic residues. Residues 1 to 51 (MSKAKTHSGAAKRFKKTASGYKHKHAFKSHILTKMTTKRKRQLRGTSLLNA) form a disordered region.

It belongs to the bacterial ribosomal protein bL35 family.

In Saccharophagus degradans (strain 2-40 / ATCC 43961 / DSM 17024), this protein is Large ribosomal subunit protein bL35.